Reading from the N-terminus, the 571-residue chain is Ubiquitin-like-specific protease 1C (571 aa).

The interval 221-260 is disordered; the sequence is SESKDPKGDRRPNEAYGKGKPNESSPYLLVDDDDGDDDKV. The span at 222–233 shows a compositional bias: basic and acidic residues; that stretch reads ESKDPKGDRRPN. Active-site residues include histidine 426, aspartate 449, and cysteine 512.

The protein belongs to the peptidase C48 family.

The protein resides in the nucleus. The protein localises to the nucleoplasm. Its function is as follows. Protease that catalyzes two essential functions in the SUMO pathway: processing of full-length SUMOs to their mature forms and deconjugation of SUMO from targeted proteins. Cleaves precursors of SUM1 and SUM2, but not of SUM3 or SUM5. Able to release SUM1 and SUM2 from conjugates, but unable to cleave SUM3. Protease activity mainly directed at deconjugating SUM1 and SUM2 from their target proteins. Regulates salt stress responses and flowering time. Redundant with ULP1D. The chain is Ubiquitin-like-specific protease 1C (ULP1C) from Arabidopsis thaliana (Mouse-ear cress).